Reading from the N-terminus, the 568-residue chain is MSLRLPQNPNAGLFKQGYNSYSNADGQIIKSIAAIRELHQMCLTSMGPCGRNKIIVNHLGKIIITNDAATMLRELDIVHPAVKVLVMATEQQKIDMGDGTNLVMILAGELLNVSEKLISMGLSAVEIIQGYNMARKFTLKELDEMVVGEITDKNDKNELLKMIKPVISSKKYGSEDILSELVSEAVSHVLPVAQQAGEIPYFNVDSIRVVKIMGGSLSNSTVIKGMVFNREPEGHVKSLSEDKKHKVAVFTCPLDIANTETKGTVLLHNAQEMLDFSKGEEKQIDAMMKEIADMGVECIVAGAGVGELALHYLNRYGILVLKVPSKFELRRLCRVCGATPLPRLGAPTPEELGLVETVKTMEIGGDRVTVFKQEQGEISRTSTIILRGATQNNLDDIERAIDDGVAAVKGLMKPSGGKLLPGAGATEIELISRITKYGERTPGLLQLAIKQFAVAFEVVPRTLAETAGLDVNEVLPNLYAAHNVTEPGAVKTDHLYKGVDIDGESDEGVKDIREENIYDMLATKKFAINVATEAATTVLSIDQIIMAKKAGGPRAPQGPRPGNWDQED.

K15 is covalently cross-linked (Glycyl lysine isopeptide (Lys-Gly) (interchain with G-Cter in ubiquitin)). S505 is modified (phosphoserine).

Belongs to the TCP-1 chaperonin family. Heterooligomeric complex of about 850 to 900 kDa that forms two stacked rings, 12 to 16 nm in diameter.

It localises to the cytoplasm. Molecular chaperone; assists the folding of proteins upon ATP hydrolysis. Known to play a role, in vitro, in the folding of actin and tubulin. In yeast may play a role in mitotic spindle formation. This chain is T-complex protein 1 subunit theta (CCT8), found in Saccharomyces cerevisiae (strain ATCC 204508 / S288c) (Baker's yeast).